A 455-amino-acid chain; its full sequence is Exodeoxyribonuclease 7 large subunit (455 aa).

The protein belongs to the XseA family. Heterooligomer composed of large and small subunits.

Its subcellular location is the cytoplasm. It catalyses the reaction Exonucleolytic cleavage in either 5'- to 3'- or 3'- to 5'-direction to yield nucleoside 5'-phosphates.. In terms of biological role, bidirectionally degrades single-stranded DNA into large acid-insoluble oligonucleotides, which are then degraded further into small acid-soluble oligonucleotides. The sequence is that of Exodeoxyribonuclease 7 large subunit from Escherichia coli O7:K1 (strain IAI39 / ExPEC).